Consider the following 132-residue polypeptide: Interleukin-13 (132 aa).

An N-terminal signal peptide occupies residues 1–18 (MALLLTMVIALTCLGGFA). Residues Asn-38, Asn-49, Asn-57, and Asn-72 are each glycosylated (N-linked (GlcNAc...) asparagine). 2 disulfide bridges follow: Cys-48-Cys-76 and Cys-64-Cys-90.

This sequence belongs to the IL-4/IL-13 family. As to quaternary structure, interacts with IL13RA2.

The protein localises to the secreted. In terms of biological role, cytokine that plays important roles in allergic inflammation and immune response to parasite infection. Synergizes with IL2 in regulating interferon-gamma synthesis. Stimulates B-cell proliferation, and activation of eosinophils, basophils, and mast cells. Plays an important role in controlling IL33 activity by modulating the production of transmembrane and soluble forms of interleukin-1 receptor-like 1/IL1RL1. Displays the capacity to antagonize Th1-driven proinflammatory immune response and downregulates synthesis of many proinflammatory cytokines including IL1, IL6, IL10, IL12 and TNF-alpha through a mechanism that partially involves suppression of NF-kappa-B. Also functions on nonhematopoietic cells, including endothelial cells where it induces vascular cell adhesion protein 1/VCAM1, which is important in the recruitment of eosinophils. Exerts its biological effects through its receptors which comprises the IL4R chain and the IL13RA1 chain, to activate JAK1 and TYK2, leading to the activation of STAT6. Aside from IL13RA1, another receptor IL13RA2 acts as a high affinity decoy for IL13 and mediates internalization and depletion of extracellular IL13. The protein is Interleukin-13 (IL13) of Macaca thibetana (Pere David's macaque).